We begin with the raw amino-acid sequence, 463 residues long: Digalactosyldiacylglycerol synthase 2, chloroplastic (463 aa).

Positions 1–22 (MGKKQHIAIFTTASLPWLTGTA) are cleaved as a signal peptide.

It belongs to the glycosyltransferase group 1 family. Glycosyltransferase 4 subfamily. As to expression, high expression in nodules infected cells, and low in nodule and root vascular tissue.

It is found in the plastid. The protein localises to the chloroplast outer membrane. It localises to the plastid outer membrane. The catalysed reaction is a 1,2-diacyl-3-O-(beta-D-galactosyl)-sn-glycerol + UDP-alpha-D-galactose = a 1,2-diacyl-3-O-[alpha-D-galactosyl-(1-&gt;6)-beta-D-galactosyl]-sn-glycerol + UDP + H(+). Functionally, involved in the synthesis of diacylglycerol galactolipids that are specifically found in thylakoid and in nodule peribacteroid membranes. Specific for alpha-glycosidic linkages. The chain is Digalactosyldiacylglycerol synthase 2, chloroplastic from Lotus japonicus (Lotus corniculatus var. japonicus).